We begin with the raw amino-acid sequence, 649 residues long: V-type ATP synthase subunit I (649 aa).

7 consecutive transmembrane segments (helical) span residues 312 to 332 (FLSF…GLIF), 360 to 380 (FMIL…FFGV), 455 to 475 (DNIL…LGML), 485 to 505 (IGWV…LQAV), 520 to 540 (GQVG…GGII), 556 to 576 (VFSD…GAMV), and 593 to 613 (VLII…GGVI).

The protein belongs to the V-ATPase 116 kDa subunit family.

It localises to the cell membrane. Produces ATP from ADP in the presence of a proton gradient across the membrane. The sequence is that of V-type ATP synthase subunit I (atpI) from Chlamydia muridarum (strain MoPn / Nigg).